A 412-amino-acid polypeptide reads, in one-letter code: Methylmalonic aciduria type A homolog, mitochondrial (412 aa).

The N-terminal 15 residues, 1–15, are a transit peptide targeting the mitochondrion; sequence MVVRALVRAHPLSRI. Residues 132–140, D275, and 311–313 each bind GTP; these read GSPGVGKSS and SIM.

The protein belongs to the SIMIBI class G3E GTPase family. ArgK/MeaB subfamily.

The protein localises to the mitochondrion. Its function is as follows. May have GTPase activity. May also bind and hydrolyze ATP. May function as chaperone. Likely to have a role in propionyl-CoA metabolism and adenosylcobalamin synthesis. The polypeptide is Methylmalonic aciduria type A homolog, mitochondrial (Caenorhabditis briggsae).